The primary structure comprises 912 residues: MASESDTEEFFDAPEDVHLEGGDPIGYPGKVGISALKETENSAYKVGNESTVQELKQDVSKKIIESIIEESQKVIQLEDDSLDSKGKGQSDQATASPVTAGTELSNIPGLLAIDQVLQEDSQKAESQDVSEETELESKQCFPSDDTCEKPVDETTKLTEISSTAQLNVPETVTEVLNKEEVEVKESDVLESASSHSLSTKDFAVVEEVAPAKPPRQLTPEPDIVASTKKPVPARPPPPANFPPPRPPPPSRPAPPPRKKKSELEFEALKTPDLDVPKENITSDTLLTTNMASESTVKDSQPSLDLASATSGDKIVTAQENGKAPDGQTIAGEVMGPQRPRSNSGRELTDEEILASVMIKNLDTGEEIPLSLAEEKLPTGINPLTLHIMRRTKEYVSNDAAQSDDEEKLQSQQTDTDGGRLKQKTTQLKKFLGKSVKRAKHLAEEYGERAVNKVKSVRDEVFHTDQDDPSSSDDEGMPYTRPVKFKAAHGFKGPYDFDQIKVVQDLSGEHMGAVWTMKFSHCGRLLASAGQDNVVRIWALKNAFDYFNNMRMKYNTEGRVSPSPSQESLNSSKSDTDTGVCSGTDEDPDDKNAPFRQRPFCKYKGHTADLLDLSWSKNYFLLSSSMDKTVRLWHISRRECLCCFQHIDFVTAIAFHPRDDRYFLSGSLDGKLRLWNIPDKKVALWNEVDGQTKLITAANFCQNGKYAVIGTYDGRCIFYDTEHLKYHTQIHVRSTRGRNKVGRKITGIEPLPGENKILVTSNDSRIRLYDLRDLSLSMKYKGYVNSSSQIKASFSHDFNYLVSGSEDKYVYIWSTYHDLSKFTSVRRDRNDFWEGIKAHNAVVTSAIFAPNPSLMLSLDVQSEKSEGNEKGEDAEVLETMPSGIMKTDNTEVLLSADFTGAIKVFINKRKNLS.

Residues 1–14 (MASESDTEEFFDAP) are compositionally biased toward acidic residues. The tract at residues 1 to 25 (MASESDTEEFFDAPEDVHLEGGDPI) is disordered. An N-acetylalanine modification is found at A2. The binding activity stretch occupies residues 2 to 170 (ASESDTEEFF…SSTAQLNVPE (169 aa)). Position 3 is a phosphoserine (S3). The FFAT-like motif motif lies at 9–15 (EFFDAPE). A phosphoserine mark is found at S50, S66, S71, S81, S96, and S126. 2 disordered regions span residues 79–104 (DDSL…GTEL) and 118–152 (QEDS…KPVD). A compositionally biased stretch (polar residues) spans 89 to 104 (QSDQATASPVTAGTEL). T158 is modified (phosphothreonine). 5 disordered regions span residues 183–202 (VKES…TKDF), 207–279 (EVAP…PKEN), 318–349 (QENG…ELTD), 396–422 (SNDA…RLKQ), and 457–479 (RDEV…MPYT). Residues 210–256 (PAKPPRQLTPEPDIVASTKKPVPARPPPPANFPPPRPPPPSRPAPPP) are important for interaction with ARHGAP26 AND ARHGAP10. Residue T218 is modified to Phosphothreonine. Positions 232-255 (PARPPPPANFPPPRPPPPSRPAPP) are enriched in pro residues. S261 carries the phosphoserine modification. The segment covering 261–277 (SELEFEALKTPDLDVPK) has biased composition (basic and acidic residues). Residue T270 is modified to Phosphothreonine. Residues 333–346 (VMGPQRPRSNSGRE) form an important for interaction with RAB11A region. An interaction with RAB11 region spans residues 334 to 504 (MGPQRPRSNS…DFDQIKVVQD (171 aa)). Phosphoserine occurs at positions 341 and 343. T348 is modified (phosphothreonine). A phosphoserine mark is found at S402, S469, S470, and S471. Over residues 466–475 (DDPSSSDDEG) the composition is skewed to acidic residues. Y478 carries the post-translational modification Phosphotyrosine. One copy of the WD 1 repeat lies at 508–547 (EHMGAVWTMKFSHCGRLLASAGQDNVVRIWALKNAFDYFN). The disordered stretch occupies residues 556–592 (EGRVSPSPSQESLNSSKSDTDTGVCSGTDEDPDDKNA). Residues S560 and S564 each carry the phosphoserine modification. The segment covering 560 to 572 (SPSPSQESLNSSK) has biased composition (low complexity). 6 WD repeats span residues 604–642 (GHTA…CLCC), 644–684 (QHID…VALW), 689–728 (GQTK…YHTQ), 739–778 (KVGR…LSMK), 783–822 (VNSS…SKFT), and 871–912 (EDAE…KNLS).

As to quaternary structure, interacts with the GTP-bound form of RAB11A when membrane-associated. Interacts with GRAF1/ARHGAP26 or GRAF2/ARHGAP10; the interaction connects the endoplasmic reticulum (ER) with the endosomal tubule. Interacts (via FFAT-like motif) with VAPA (via MSP domain) or VAPB (via MSP domain); the interaction connects the ER with the endosomal tubule. Does not bind to other Rab and Rho small G proteins. Phosphorylated by ATK1; the phosphorylation stabilizes its interaction with RAB11A and RAB11B. As to expression, highly expressed in brain.

Its subcellular location is the cytoplasm. It is found in the cytosol. The protein resides in the perinuclear region. The protein localises to the endosome membrane. It localises to the golgi apparatus. Its subcellular location is the trans-Golgi network. In terms of biological role, downstream effector for Rab11 which regulates Rab11 intracellular membrane trafficking functions such as endocytic recycling, intracellular ciliogenesis and protein export. ATK1-mediated phosphorylation of WDR44 induces binding to Rab11 which activates endocytic recycling of transferrin receptor back to the plasma membrane. When bound to Rab11, prevents the formation of the ciliogenic Rab11-Rabin8/RAB3IP-RAB11FIP3 complex, therefore inhibiting preciliary trafficking and ciliogenesis. Participates in neo-synthesized protein export by connecting the endoplasmic reticulum (ER) with the endosomal tubule via direct interactions with the integral ER proteins VAPA or VAPB and the endosomal protein GRAFs (GRAF1/ARHGAP26 or GRAF2/ARHGAP10), which facilitates the transfer of proteins such as E-cadherin, MPP14 and CFTR into a Rab8-Rab10-Rab11-dependent export route. The protein is WD repeat-containing protein 44 (WDR44) of Bos taurus (Bovine).